A 173-amino-acid chain; its full sequence is MAAPSGGWNGVGASLWAALLLGAVALRPAEAVSEPTTVAFDVRPGGVVHSFSHNVGPGDKYTCMFTYASQGGTNEQWQMSLGTSEDHQHFTCTIWRPQGKSYLYFTQFKAEVRGAEIEYAMAYSKAAFERESDVPLKTEEFEVTKTAVAHRPGAFKAELSKLVIVAKASRTEL.

Residues 1–31 (MAAPSGGWNGVGASLWAALLLGAVALRPAEA) form the signal peptide.

This sequence belongs to the MYDGF family. In terms of tissue distribution, expressed in eosinophils (at protein level). Expressed in bone marrow cells. Expressed in synovial tissue. Found in synovial fluid of patients with arthropaties.

Its subcellular location is the secreted. It is found in the endoplasmic reticulum-Golgi intermediate compartment. It localises to the endoplasmic reticulum. The protein resides in the golgi apparatus. Its function is as follows. Bone marrow-derived monocyte and paracrine-acting protein that promotes cardiac myocyte survival and adaptive angiogenesis for cardiac protection and/or repair after myocardial infarction (MI). Stimulates endothelial cell proliferation through a MAPK1/3-, STAT3- and CCND1-mediated signaling pathway. Inhibits cardiac myocyte apoptosis in a PI3K/AKT-dependent signaling pathway. Involved in endothelial cell proliferation and angiogenesis. In Homo sapiens (Human), this protein is Myeloid-derived growth factor.